Here is a 348-residue protein sequence, read N- to C-terminus: Ion-translocating oxidoreductase complex subunit D (348 aa).

4 consecutive transmembrane segments (helical) span residues 23-43 (WVLA…GYGT), 44-64 (LIQL…IMLL), 72-91 (ALRD…AIPP), and 126-146 (IAYV…MAPI). Threonine 187 carries the post-translational modification FMN phosphoryl threonine. Transmembrane regions (helical) follow at residues 214–234 (FAGI…LILL), 243–263 (IPMA…LFAP), 266–286 (TASP…FFIA), 300–320 (LIYG…GGFP), and 321–341 (DGVA…DYYT).

It belongs to the NqrB/RnfD family. The complex is composed of six subunits: RnfA, RnfB, RnfC, RnfD, RnfE and RnfG. FMN serves as cofactor.

It is found in the cell inner membrane. Its function is as follows. Part of a membrane-bound complex that couples electron transfer with translocation of ions across the membrane. This is Ion-translocating oxidoreductase complex subunit D from Vibrio cholerae serotype O1 (strain ATCC 39315 / El Tor Inaba N16961).